The following is a 338-amino-acid chain: NADH-quinone oxidoreductase subunit H (338 aa).

8 consecutive transmembrane segments (helical) span residues 22-42, 96-116, 121-141, 161-181, 193-213, 249-269, 277-297, and 315-335; these read VVQA…MSFI, VAMA…ALGV, IGLL…LFGG, ISYE…AGSF, VWFI…GVAV, YVNV…GWLA, FVPP…MFVL, and WKIC…VILM.

This sequence belongs to the complex I subunit 1 family. As to quaternary structure, NDH-1 is composed of 14 different subunits. Subunits NuoA, H, J, K, L, M, N constitute the membrane sector of the complex.

It localises to the cell inner membrane. It carries out the reaction a quinone + NADH + 5 H(+)(in) = a quinol + NAD(+) + 4 H(+)(out). NDH-1 shuttles electrons from NADH, via FMN and iron-sulfur (Fe-S) centers, to quinones in the respiratory chain. The immediate electron acceptor for the enzyme in this species is believed to be ubiquinone. Couples the redox reaction to proton translocation (for every two electrons transferred, four hydrogen ions are translocated across the cytoplasmic membrane), and thus conserves the redox energy in a proton gradient. This subunit may bind ubiquinone. This Acinetobacter baumannii (strain ATCC 17978 / DSM 105126 / CIP 53.77 / LMG 1025 / NCDC KC755 / 5377) protein is NADH-quinone oxidoreductase subunit H.